A 902-amino-acid chain; its full sequence is Leucine-rich repeat-containing G-protein coupled receptor 5A (902 aa).

Positions 1–22 are cleaved as a signal peptide; it reads MDTSRTSLFLCSVLYSLQLVGS. At 23–557 the chain is on the extracellular side; that stretch reads ARPGKQHRSC…DHLFGSWLTR (535 aa). Disulfide bonds link Cys32–Cys38 and Cys36–Cys49. The 30-residue stretch at 32–61 folds into the LRRNT domain; it reads CPTPCECEQDGMLVRVDCSDRGLTGLPRNI. LRR repeat units lie at residues 41–61, 62–85, 86–109, 111–133, 134–157, 159–181, 182–205, 207–229, 230–253, 254–276, 278–300, 301–324, 325–347, 348–372, 374–393, 394–417, and 418–441; these read DGMLVRVDCSDRGLTGLPRNI, SIFTSYLDLSMNNITKLPSNALHN, LHFLEELRLAGNDLTYIPKGAFAG, GSLKVLMLQNNLLRQVPSEALQN, LRSLQSLRLDANHISYVPPSSFNG, FSLRHLWLDDNSLTEIPVRALES, LSALQAMTLALNKIHHIPDYAFGN, SSLVVLHLHNNRIYSLGKKCFDG, LHSLETLDLNYNNLDEFPAAIKTL, KNLKELGFHSNNIKSIPEQAFIG, PSLITTHFYDNPIQHVGRSAFQH, LPELRTLILNGASQITEFPDLTGT, TSLESLTLTGAQLVYLPSAVCNQ, LPNLKVIDLSYNHIKDLPSFSGCQR, QKIDLRHNEVYEIRFTTFQQ, LVGLRSLDLAWNKIAVIHPSSFSS, and LPSLIKLDLSSNHLTSFPVTGLHG. Residues Asn60 and Asn74 are each glycosylated (N-linked (GlcNAc...) asparagine). Asn205 carries an N-linked (GlcNAc...) asparagine glycan. A disulfide bridge connects residues Cys345 and Cys370. Residues Cys476 and Cys537 are joined by a disulfide bond. A glycan (N-linked (GlcNAc...) asparagine) is linked at Asn496. Residues 558–578 traverse the membrane as a helical segment; sequence IGVWLIVLLSFVCNALVIATV. Residues 579-589 lie on the Cytoplasmic side of the membrane; it reads FRPLSYVPSIK. The chain crosses the membrane as a helical span at residues 590–610; that stretch reads LLIGLIAIINTLMGLSSGVLA. Residues 598–619 form an LRR 18 repeat; sequence INTLMGLSSGVLATVDALTFGN. The Extracellular portion of the chain corresponds to 611-634; the sequence is TVDALTFGNFAQYGAWWESGVGCQ. Cys633 and Cys708 are oxidised to a cystine. A helical membrane pass occupies residues 635 to 655; that stretch reads ITGFLSVFAAETSVFLLTVAA. The Cytoplasmic segment spans residues 656 to 678; the sequence is LERGFSIKCTTKFETKSSFLSVK. The helical transmembrane segment at 679–699 threads the bilayer; the sequence is LSIVFCFLLSIIIAVSPLMSG. At 700–718 the chain is on the extracellular side; it reads STYGTSPFCFPLLFGDPSS. Residues 719–739 traverse the membrane as a helical segment; that stretch reads MVFMVALVLLNSLCFLVMTVA. At 740 to 763 the chain is on the cytoplasmic side; sequence YTKLYCSLEKGELENVWDCSMVKH. A helical transmembrane segment spans residues 764–784; sequence IALLLFTNCILYCPVAFLSFS. Residues 785–798 lie on the Extracellular side of the membrane; that stretch reads SLLNLTFISPEVNK. 2 N-linked (GlcNAc...) asparagine glycosylation sites follow: Asn788 and Asn797. The chain crosses the membrane as a helical span at residues 799 to 819; the sequence is SILLLIIPLPACLNPLLYILF. Residues 820 to 902 lie on the Cytoplasmic side of the membrane; it reads NPHFKEDIGS…LSAVAFVPCH (83 aa).

The protein belongs to the G-protein coupled receptor 1 family. In terms of tissue distribution, expressed in the developing epithelial stem cells of the intestine.

Its subcellular location is the cell membrane. The protein localises to the golgi apparatus. The protein resides in the trans-Golgi network membrane. Functionally, receptor for R-spondins that potentiates the canonical Wnt signaling pathway and acts as a stem cell marker of the intestinal epithelium and the hair follicle. Upon binding to R-spondins (RSPO1, RSPO2, RSPO3 or RSPO4), associates with phosphorylated LRP6 and frizzled receptors that are activated by extracellular Wnt receptors, triggering the canonical Wnt signaling pathway to increase expression of target genes. In contrast to classical G-protein coupled receptors, does not activate heterotrimeric G-proteins to transduce the signal. Involved in the development and/or maintenance of the adult intestinal stem cells during postembryonic development. The sequence is that of Leucine-rich repeat-containing G-protein coupled receptor 5A (lgr5-a) from Xenopus laevis (African clawed frog).